The chain runs to 238 residues: Orotidine 5'-phosphate decarboxylase (238 aa).

Residues D10, K32, D59 to T68, T122, R184, Q193, G213, and R214 each bind substrate. K61 acts as the Proton donor in catalysis.

Belongs to the OMP decarboxylase family. Type 1 subfamily. As to quaternary structure, homodimer.

It carries out the reaction orotidine 5'-phosphate + H(+) = UMP + CO2. The protein operates within pyrimidine metabolism; UMP biosynthesis via de novo pathway; UMP from orotate: step 2/2. Catalyzes the decarboxylation of orotidine 5'-monophosphate (OMP) to uridine 5'-monophosphate (UMP). The sequence is that of Orotidine 5'-phosphate decarboxylase from Bacillus anthracis (strain A0248).